A 356-amino-acid chain; its full sequence is uncharacterized protein (356 aa).

Transmembrane regions (helical) follow at residues 258 to 275 (SALQAAAAVIEFVAVFYY), 290 to 312 (PHWLSFSLLAAFTFTVVVYTEAL), and 325 to 347 (LVLLTLTLAILVILMATLPTLFS).

It localises to the cell membrane. This is an uncharacterized protein from Archaeoglobus fulgidus (strain ATCC 49558 / DSM 4304 / JCM 9628 / NBRC 100126 / VC-16).